A 1372-amino-acid chain; its full sequence is Paired amphipathic helix protein Sin3-like 1 (1372 aa).

Positions 1–50 (MKRIRDDVYASGSQFRRPLGSSRGQLCGQSPVHGSGDTEEEEEGGSRRVS) are disordered. 2 PAH domains span residues 51 to 121 (QKLT…LPKG) and 136 to 206 (KTVE…LPAS). Over residues 210–222 (HSAAQHSRSQAQQ) the composition is skewed to low complexity. Disordered stretches follow at residues 210-244 (HSAAQHSRSQAQQYSDRGSDPPLLHQMQVEKERRR) and 272-323 (REQR…SGSA). Positions 272–315 (REQRKRLDKENRARRGRDLDDREAGQDNLHHFPEKRKSSRRAEA) are enriched in basic and acidic residues. Residues 331–400 (LKSMYKQAFV…DEFNQFFERC (70 aa)) form the PAH 3 domain. 3 disordered regions span residues 764 to 783 (DVNHSTSPNGEAAVSSGGDT), 791 to 817 (LKSAANGDENSSSGTFKHGIGLLNKDS), and 934 to 1056 (GLRS…AEGM). Residues 938–957 (DSSKGTRNSDDPEGPSRNEK) show a composition bias toward basic and acidic residues. Acidic residues-rich tracts occupy residues 990–1013 (AEAEVEADAEVENEDDADDVDSEN) and 1028–1042 (SQDEDREEENGEHDE). Ser1049 carries the phosphoserine modification.

As to quaternary structure, interacts (via PAH3) with ALY2. Interacts (via PAH2) with TBP1. Interacts with ALY3, GATA21, TRP2, TKI1, VAL1, SKP1B, FBX5 and PUB14.

It localises to the nucleus. In terms of biological role, acts as a transcriptional repressor. A histone deacetylase (HDAC) activity is required for transcription repression. May play a role in telomere stability. This is Paired amphipathic helix protein Sin3-like 1 (SNL1) from Arabidopsis thaliana (Mouse-ear cress).